The following is a 746-amino-acid chain: Bud site selection protein 7 (746 aa).

Positions 733 to 746 (LNFFTTCTIGCYDA) are CHS5-binding.

The protein belongs to the CHAPS family. As to quaternary structure, component of the CHS5/6 complex composed of the 4 CHAPS proteins BCH1, BCH2v, BUD7, and CHS6 as well as at least CHS5 and GTP-bound ARF1. The complex interacts with the cargo protein CHS3.

It is found in the golgi apparatus. The protein resides in the trans-Golgi network membrane. Member of the CHS5-ARF1P-binding proteins (CHAPS) which mediates export of specific cargo proteins, including chitin synthase CHS3. May be involved in positioning the proximal bud pole signal. The sequence is that of Bud site selection protein 7 (BUD7) from Saccharomyces cerevisiae (strain ATCC 204508 / S288c) (Baker's yeast).